The primary structure comprises 295 residues: 4-hydroxy-3-methylbut-2-enyl diphosphate reductase (295 aa).

C12 lines the [4Fe-4S] cluster pocket. (2E)-4-hydroxy-3-methylbut-2-enyl diphosphate contacts are provided by H43 and H81. The dimethylallyl diphosphate site is built by H43 and H81. Isopentenyl diphosphate is bound by residues H43 and H81. C103 is a binding site for [4Fe-4S] cluster. H131 contacts (2E)-4-hydroxy-3-methylbut-2-enyl diphosphate. H131 is a dimethylallyl diphosphate binding site. An isopentenyl diphosphate-binding site is contributed by H131. The active-site Proton donor is E133. T171 lines the (2E)-4-hydroxy-3-methylbut-2-enyl diphosphate pocket. Position 199 (C199) interacts with [4Fe-4S] cluster. (2E)-4-hydroxy-3-methylbut-2-enyl diphosphate-binding residues include S227, N229, and S272. The dimethylallyl diphosphate site is built by S227, N229, and S272. Isopentenyl diphosphate-binding residues include S227, N229, and S272.

It belongs to the IspH family. It depends on [4Fe-4S] cluster as a cofactor.

The catalysed reaction is isopentenyl diphosphate + 2 oxidized [2Fe-2S]-[ferredoxin] + H2O = (2E)-4-hydroxy-3-methylbut-2-enyl diphosphate + 2 reduced [2Fe-2S]-[ferredoxin] + 2 H(+). It carries out the reaction dimethylallyl diphosphate + 2 oxidized [2Fe-2S]-[ferredoxin] + H2O = (2E)-4-hydroxy-3-methylbut-2-enyl diphosphate + 2 reduced [2Fe-2S]-[ferredoxin] + 2 H(+). It functions in the pathway isoprenoid biosynthesis; dimethylallyl diphosphate biosynthesis; dimethylallyl diphosphate from (2E)-4-hydroxy-3-methylbutenyl diphosphate: step 1/1. Its pathway is isoprenoid biosynthesis; isopentenyl diphosphate biosynthesis via DXP pathway; isopentenyl diphosphate from 1-deoxy-D-xylulose 5-phosphate: step 6/6. In terms of biological role, catalyzes the conversion of 1-hydroxy-2-methyl-2-(E)-butenyl 4-diphosphate (HMBPP) into a mixture of isopentenyl diphosphate (IPP) and dimethylallyl diphosphate (DMAPP). Acts in the terminal step of the DOXP/MEP pathway for isoprenoid precursor biosynthesis. In Symbiobacterium thermophilum (strain DSM 24528 / JCM 14929 / IAM 14863 / T), this protein is 4-hydroxy-3-methylbut-2-enyl diphosphate reductase.